Here is a 775-residue protein sequence, read N- to C-terminus: Isopimaradiene synthase (775 aa).

The N-terminal 36 residues, 1-36 (MFSSSLKLKTNPLMDNKIHRSSSDRDFRGSTISSVK), are a transit peptide targeting the chloroplast. Asp-525, Asp-529, Asn-669, Gln-672, and Glu-677 together coordinate Mg(2+). The DDXXD motif motif lies at 525-529 (DDFFD).

Belongs to the terpene synthase family. The cofactor is Mg(2+). Ubiquitous expression in roots, stems, leaves and flowers.

It localises to the plastid. The protein localises to the chloroplast. It carries out the reaction (+)-copalyl diphosphate = isopimara-8(14),15-diene + diphosphate. It functions in the pathway secondary metabolite biosynthesis; terpenoid biosynthesis. In terms of biological role, involved in the biosynthesis of ent-kaurene diterpenoids natural products such as oridonin, miltiradiene, eriocalyxin B and nezukol, known to exhibit antitumor, anti-inflammatory and antibacterial activities. Catalyzes the conversion of (+)-copalyl diphosphate ((+)-CPP) to isopimaradiene. The sequence is that of Isopimaradiene synthase from Isodon rubescens (Rabdosia rubescens).